Here is a 306-residue protein sequence, read N- to C-terminus: Solute carrier family 25 member 48 (306 aa).

Solcar repeat units lie at residues 3-86 (SFQL…TQRF), 101-200 (RSLS…LSEW), and 209-296 (PSPY…SLKA). A run of 6 helical transmembrane segments spans residues 9–29 (FVAG…LDTV), 61–81 (GMSF…GVFS), 107–127 (LLAS…VELI), 184–204 (IPGY…ITPE), 212–232 (YAAW…ATPM), and 272–290 (ITVN…FLGY).

It belongs to the mitochondrial carrier (TC 2.A.29) family.

The protein resides in the mitochondrion inner membrane. The polypeptide is Solute carrier family 25 member 48 (Slc25a48) (Mus musculus (Mouse)).